An 829-amino-acid chain; its full sequence is Protein SEY1 (829 aa).

Residues 1–721 lie on the Cytoplasmic side of the membrane; sequence MNQTPQIAQD…KRSMVSSVAQ (721 aa). The 224-residue stretch at 87-310 folds into the GB1/RHD3-type G domain; it reads GFAYDVVAVF…REDYVFQPAY (224 aa). Position 97 to 104 (97 to 104) interacts with GTP; sequence GSQSTGKS. A coiled-coil region spans residues 487–525; that stretch reads EYEHELALLDEDLKLIADKCRADETKKMVNAIERNVKRQ. A helical transmembrane segment spans residues 722–742; the sequence is IPVWMYGVLVVLGWNEAMAVL. Over 743-745 the chain is Lumenal; the sequence is FNP. Residues 746–766 form a helical membrane-spanning segment; that stretch reads LYFAMLLVLAASGYIILQLGL. Residues 767–829 are Cytoplasmic-facing; sequence AGPILQIAST…DLIKGEMLEK (63 aa). The segment at 806-829 is disordered; sequence PVTASSSDEQERKGDLIKGEMLEK. A compositionally biased stretch (basic and acidic residues) spans 814–829; that stretch reads EQERKGDLIKGEMLEK.

Belongs to the TRAFAC class dynamin-like GTPase superfamily. GB1/RHD3 GTPase family. RHD3 subfamily.

The protein resides in the endoplasmic reticulum membrane. Its function is as follows. Cooperates with the reticulon proteins and tubule-shaping DP1 family proteins to generate and maintain the structure of the tubular endoplasmic reticulum network. Has GTPase activity, which is required for its function in ER organization. The polypeptide is Protein SEY1 (Cryptococcus neoformans var. neoformans serotype D (strain B-3501A) (Filobasidiella neoformans)).